Here is a 371-residue protein sequence, read N- to C-terminus: Ferrochelatase (371 aa).

Positions 218 and 299 each coordinate Fe cation.

This sequence belongs to the ferrochelatase family.

The protein localises to the cytoplasm. The catalysed reaction is heme b + 2 H(+) = protoporphyrin IX + Fe(2+). Its pathway is porphyrin-containing compound metabolism; protoheme biosynthesis; protoheme from protoporphyrin-IX: step 1/1. In terms of biological role, catalyzes the ferrous insertion into protoporphyrin IX. The chain is Ferrochelatase from Cupriavidus necator (strain ATCC 17699 / DSM 428 / KCTC 22496 / NCIMB 10442 / H16 / Stanier 337) (Ralstonia eutropha).